A 300-amino-acid chain; its full sequence is Acetaldehyde dehydrogenase 3 (300 aa).

NAD(+) is bound at residue 11–14 (SGNI). Catalysis depends on Cys126, which acts as the Acyl-thioester intermediate. NAD(+)-binding positions include 157-165 (SAGPGTRAN) and Asn276.

The protein belongs to the acetaldehyde dehydrogenase family.

The enzyme catalyses acetaldehyde + NAD(+) + CoA = acetyl-CoA + NADH + H(+). The sequence is that of Acetaldehyde dehydrogenase 3 (hsaG) from Rhodococcus jostii (strain RHA1).